We begin with the raw amino-acid sequence, 548 residues long: CTP synthase (548 aa).

The amidoligase domain stretch occupies residues 1-265 (MTRYIFVTGG…DDIICDKLRI (265 aa)). Ser13 is a CTP binding site. Ser13 is a binding site for UTP. ATP contacts are provided by residues 14–19 (SLGKGI) and Asp71. Positions 71 and 139 each coordinate Mg(2+). CTP-binding positions include 146–148 (DIE), 186–191 (KTKPTQ), and Lys222. Residues 186-191 (KTKPTQ) and Lys222 each bind UTP. The region spanning 290 to 541 (NIAMVGKYME…VNAALAYKAA (252 aa)) is the Glutamine amidotransferase type-1 domain. Gly351 serves as a coordination point for L-glutamine. Cys378 functions as the Nucleophile; for glutamine hydrolysis in the catalytic mechanism. L-glutamine-binding positions include 379–382 (LGMQ), Glu402, and Arg469. Residues His514 and Glu516 contribute to the active site.

The protein belongs to the CTP synthase family. As to quaternary structure, homotetramer.

It carries out the reaction UTP + L-glutamine + ATP + H2O = CTP + L-glutamate + ADP + phosphate + 2 H(+). The enzyme catalyses L-glutamine + H2O = L-glutamate + NH4(+). The catalysed reaction is UTP + NH4(+) + ATP = CTP + ADP + phosphate + 2 H(+). It functions in the pathway pyrimidine metabolism; CTP biosynthesis via de novo pathway; CTP from UDP: step 2/2. Its activity is regulated as follows. Allosterically activated by GTP, when glutamine is the substrate; GTP has no effect on the reaction when ammonia is the substrate. The allosteric effector GTP functions by stabilizing the protein conformation that binds the tetrahedral intermediate(s) formed during glutamine hydrolysis. Inhibited by the product CTP, via allosteric rather than competitive inhibition. Catalyzes the ATP-dependent amination of UTP to CTP with either L-glutamine or ammonia as the source of nitrogen. Regulates intracellular CTP levels through interactions with the four ribonucleotide triphosphates. This is CTP synthase from Chromohalobacter salexigens (strain ATCC BAA-138 / DSM 3043 / CIP 106854 / NCIMB 13768 / 1H11).